The chain runs to 323 residues: tRNA-modifying protein YgfZ (323 aa).

Folate is bound by residues W29 and W182.

Belongs to the tRNA-modifying YgfZ family.

It is found in the cytoplasm. In terms of biological role, folate-binding protein involved in regulating the level of ATP-DnaA and in the modification of some tRNAs. It is probably a key factor in regulatory networks that act via tRNA modification, such as initiation of chromosomal replication. The polypeptide is tRNA-modifying protein YgfZ (Vibrio cholerae serotype O1 (strain M66-2)).